Reading from the N-terminus, the 319-residue chain is Cytochrome c biogenesis protein CcsA (319 aa).

Transmembrane regions (helical) follow at residues 15 to 35 (FSIV…NKIV), 44 to 64 (GMIL…IFAG), 71 to 91 (LYES…IPYF), 96 to 116 (LSAI…SGFF), 141 to 161 (MILA…LLVI), 223 to 243 (VISL…VWAN), 258 to 278 (WAFI…NINL), and 284 to 304 (AIVA…VNLL).

The protein belongs to the CcmF/CycK/Ccl1/NrfE/CcsA family. May interact with Ccs1.

The protein localises to the plastid. Its subcellular location is the chloroplast thylakoid membrane. Its function is as follows. Required during biogenesis of c-type cytochromes (cytochrome c6 and cytochrome f) at the step of heme attachment. In Fagopyrum esculentum subsp. ancestrale (Wild buckwheat), this protein is Cytochrome c biogenesis protein CcsA.